Reading from the N-terminus, the 596-residue chain is Putative terpene synthase 2, chloroplastic (596 aa).

Residues 1 to 46 (MATLSMQVSTLSKQVKNLNTFGMGSASKLPMVARRVSTTRLRPICS) constitute a chloroplast transit peptide. Residues Asp-349 and Asp-353 each contribute to the Mn(2+) site. The short motif at 349 to 353 (DDVYD) is the DDXXD motif element. Homodimerization regions lie at residues 355 to 361 (YGTLDEL) and 427 to 464 (EAKW…FTLP). Residues Asp-493 and Glu-501 each contribute to the Mn(2+) site.

This sequence belongs to the terpene synthase family. As to quaternary structure, homodimer. Mn(2+) serves as cofactor. It depends on Mg(2+) as a cofactor.

The protein resides in the plastid. Its subcellular location is the chloroplast. It functions in the pathway secondary metabolite biosynthesis; terpenoid biosynthesis. Its function is as follows. Putative monoterpene synthase inactive on geranyl diphosphate (GPP). The sequence is that of Putative terpene synthase 2, chloroplastic from Thymus vulgaris (Thyme).